Consider the following 288-residue polypeptide: ATP synthase gamma chain (288 aa).

It belongs to the ATPase gamma chain family. F-type ATPases have 2 components, CF(1) - the catalytic core - and CF(0) - the membrane proton channel. CF(1) has five subunits: alpha(3), beta(3), gamma(1), delta(1), epsilon(1). CF(0) has three main subunits: a, b and c.

It localises to the cell inner membrane. In terms of biological role, produces ATP from ADP in the presence of a proton gradient across the membrane. The gamma chain is believed to be important in regulating ATPase activity and the flow of protons through the CF(0) complex. This Actinobacillus pleuropneumoniae serotype 5b (strain L20) protein is ATP synthase gamma chain.